Reading from the N-terminus, the 170-residue chain is Ergosterol biosynthetic protein 28 (170 aa).

Helical transmembrane passes span 7–27, 116–136, and 141–161; these read FLPE…IISI, TLAY…LFVF, and FGLP…WMPL.

This sequence belongs to the ERG28 family. Heterotetramer of ERG25, ERG26, ERG27 and ERG28. ERG28 acts as a scaffold to tether ERG27 and other 4,4-demethylation-related enzymes, forming a demethylation enzyme complex, in the endoplasmic reticulum.

The protein localises to the endoplasmic reticulum membrane. It participates in steroid metabolism; ergosterol biosynthesis. Functionally, sterol 24-C-methyltransferase; part of the third module of ergosterol biosynthesis pathway that includes the late steps of the pathway. ERG28 has a role as a scaffold to help anchor the catalytic components of the C-4 demethylation complex ERG25, ERG26 and ERG27 to the endoplasmic reticulum. The third module or late pathway involves the ergosterol synthesis itself through consecutive reactions that mainly occur in the endoplasmic reticulum (ER) membrane. Firstly, the squalene synthase ERG9 catalyzes the condensation of 2 farnesyl pyrophosphate moieties to form squalene, which is the precursor of all steroids. Squalene synthase is crucial for balancing the incorporation of farnesyl diphosphate (FPP) into sterol and nonsterol isoprene synthesis. Secondly, squalene is converted into lanosterol by the consecutive action of the squalene epoxidase ERG1 and the lanosterol synthase ERG7. Then, the delta(24)-sterol C-methyltransferase ERG6 methylates lanosterol at C-24 to produce eburicol. Eburicol is the substrate of the sterol 14-alpha demethylase encoded by CYP51A, CYP51B and CYP51C, to yield 4,4,24-trimethyl ergosta-8,14,24(28)-trienol. CYP51B encodes the enzyme primarily responsible for sterol 14-alpha-demethylation, and plays an essential role in ascospore formation. CYP51A encodes an additional sterol 14-alpha-demethylase, induced on ergosterol depletion and responsible for the intrinsic variation in azole sensitivity. The third CYP51 isoform, CYP51C, does not encode a sterol 14-alpha-demethylase, but is required for full virulence on host wheat ears. The C-14 reductase ERG24 then reduces the C14=C15 double bond which leads to 4,4-dimethylfecosterol. A sequence of further demethylations at C-4, involving the C-4 demethylation complex containing the C-4 methylsterol oxidases ERG25, the sterol-4-alpha-carboxylate 3-dehydrogenase ERG26 and the 3-keto-steroid reductase ERG27, leads to the production of fecosterol via 4-methylfecosterol. ERG28 has a role as a scaffold to help anchor ERG25, ERG26 and ERG27 to the endoplasmic reticulum. The C-8 sterol isomerase ERG2 then catalyzes the reaction which results in unsaturation at C-7 in the B ring of sterols and thus converts fecosterol to episterol. The sterol-C5-desaturases ERG3A and ERG3BB then catalyze the introduction of a C-5 double bond in the B ring to produce 5-dehydroepisterol. The C-22 sterol desaturases ERG5A and ERG5B further convert 5-dehydroepisterol into ergosta-5,7,22,24(28)-tetraen-3beta-ol by forming the C-22(23) double bond in the sterol side chain. Finally, ergosta-5,7,22,24(28)-tetraen-3beta-ol is substrate of the C-24(28) sterol reductase ERG4 to produce ergosterol. The chain is Ergosterol biosynthetic protein 28 from Gibberella zeae (strain ATCC MYA-4620 / CBS 123657 / FGSC 9075 / NRRL 31084 / PH-1) (Wheat head blight fungus).